A 1409-amino-acid chain; its full sequence is DNA-directed RNA polymerase subunit beta' (1409 aa).

Zn(2+) is bound by residues Cys69, Cys71, Cys84, and Cys87. The Mg(2+) site is built by Asp461, Asp463, and Asp465. Zn(2+)-binding residues include Cys805, Cys879, Cys886, and Cys889.

Belongs to the RNA polymerase beta' chain family. As to quaternary structure, the RNAP catalytic core consists of 2 alpha, 1 beta, 1 beta' and 1 omega subunit. When a sigma factor is associated with the core the holoenzyme is formed, which can initiate transcription. Mg(2+) is required as a cofactor. Zn(2+) serves as cofactor.

It carries out the reaction RNA(n) + a ribonucleoside 5'-triphosphate = RNA(n+1) + diphosphate. In terms of biological role, DNA-dependent RNA polymerase catalyzes the transcription of DNA into RNA using the four ribonucleoside triphosphates as substrates. This chain is DNA-directed RNA polymerase subunit beta', found in Anaplasma phagocytophilum (strain HZ).